A 473-amino-acid polypeptide reads, in one-letter code: 3-isopropylmalate dehydratase large subunit 2 (473 aa).

The [4Fe-4S] cluster site is built by Cys-350, Cys-410, and Cys-413.

The protein belongs to the aconitase/IPM isomerase family. LeuC type 1 subfamily. As to quaternary structure, heterodimer of LeuC and LeuD. [4Fe-4S] cluster serves as cofactor.

It catalyses the reaction (2R,3S)-3-isopropylmalate = (2S)-2-isopropylmalate. It participates in amino-acid biosynthesis; L-leucine biosynthesis; L-leucine from 3-methyl-2-oxobutanoate: step 2/4. Its function is as follows. Catalyzes the isomerization between 2-isopropylmalate and 3-isopropylmalate, via the formation of 2-isopropylmaleate. The chain is 3-isopropylmalate dehydratase large subunit 2 from Salmonella choleraesuis (strain SC-B67).